Here is an 845-residue protein sequence, read N- to C-terminus: Protein translocase subunit SecA 1 (845 aa).

ATP-binding positions include glutamine 91, 109 to 113 (GEGKT), and aspartate 498. Positions 795-845 (TDFGTAQHVSAEDGKEKAKKQPIVKGDKVGRNDPCPCGSGKKYKNCHGKEE) are disordered. Positions 829, 831, 840, and 841 each coordinate Zn(2+). A compositionally biased stretch (basic residues) spans 835–845 (KKYKNCHGKEE).

The protein belongs to the SecA family. As to quaternary structure, monomer and homodimer. Part of the essential Sec protein translocation apparatus which comprises SecA, SecYEG and auxiliary proteins SecDF. Other proteins may also be involved. It depends on Zn(2+) as a cofactor.

It is found in the cell membrane. The protein resides in the cytoplasm. It catalyses the reaction ATP + H2O + cellular proteinSide 1 = ADP + phosphate + cellular proteinSide 2.. Part of the Sec protein translocase complex. Interacts with the SecYEG preprotein conducting channel. Has a central role in coupling the hydrolysis of ATP to the transfer of proteins into and across the cell membrane, serving as an ATP-driven molecular motor driving the stepwise translocation of polypeptide chains across the membrane. This chain is Protein translocase subunit SecA 1, found in Staphylococcus haemolyticus (strain JCSC1435).